Reading from the N-terminus, the 65-residue chain is Prokaryotic ubiquitin-like protein UBact (65 aa).

Over residues 1–17 (MEVNMPTTEQGQKNKQM) the composition is skewed to polar residues. The interval 1–65 (MEVNMPTTEQ…ARRYRQRTGE (65 aa)) is disordered. The segment covering 35 to 65 (KVEKPNTEEILKRMRKVDPDQARRYRQRTGE) has biased composition (basic and acidic residues). Glu65 participates in a covalent cross-link: Isoglutamyl lysine isopeptide (Glu-Lys) (interchain with K-? in acceptor proteins).

This sequence belongs to the ubiquitin-like protein UBact family.

May function as a protein modifier covalently attached to lysine residues of substrate proteins. This may serve to target the modified proteins for degradation by proteasomes. This Methylacidiphilum infernorum (isolate V4) (Methylokorus infernorum (strain V4)) protein is Prokaryotic ubiquitin-like protein UBact.